A 657-amino-acid chain; its full sequence is Chemoreceptor McpA (657 aa).

The Cytoplasmic portion of the chain corresponds to 1–5; that stretch reads MKRIR. Residues 6-29 traverse the membrane as a helical segment; the sequence is LVDLPLIIKIGFAPAFALLMLAVM. Residues 30–188 lie on the Periplasmic side of the membrane; sequence AGGAILVQKS…ESESAKRQAQ (159 aa). Residues 189-212 form a helical membrane-spanning segment; the sequence is ATAAMSVTIIMSLLTLGAVGALAF. Residues 213–657 lie on the Cytoplasmic side of the membrane; it reads LTVMTTRKSI…APASDGWEEF (445 aa). 2 consecutive HAMP domains span residues 216–269 and 297–349; these read MTTR…HLEQ and QEAS…ETMK. The Methyl-accepting transducer domain maps to 354-583; that stretch reads STDGLSTGAD…QSTAATHSLK (230 aa). The residue at position 378 (Gln-378) is a Glutamate methyl ester (Gln). A glutamate methyl ester (Glu) mark is found at Glu-385 and Glu-392. Gln-574 carries the post-translational modification Glutamate methyl ester (Gln). The disordered stretch occupies residues 634-657; the sequence is ARPGRSSGSAALAQAPASDGWEEF.

It belongs to the methyl-accepting chemotaxis (MCP) protein family.

It localises to the cell membrane. Chemotactic-signal transducers respond to changes in the concentration of attractants and repellents in the environment, transduce a signal from the outside to the inside of the cell, and facilitate sensory adaptation through the variation of the level of methylation. Attractants increase the level of methylation while repellents decrease the level of methylation. The protein is Chemoreceptor McpA (mcpA) of Caulobacter vibrioides (strain ATCC 19089 / CIP 103742 / CB 15) (Caulobacter crescentus).